Consider the following 112-residue polypeptide: Large ribosomal subunit protein bL17 (112 aa).

This sequence belongs to the bacterial ribosomal protein bL17 family. As to quaternary structure, part of the 50S ribosomal subunit. Contacts protein L32.

The chain is Large ribosomal subunit protein bL17 from Carboxydothermus hydrogenoformans (strain ATCC BAA-161 / DSM 6008 / Z-2901).